The sequence spans 425 residues: Isocitrate dehydrogenase [NADP] (425 aa).

NADP(+) is bound at residue T114. Positions 123, 125, 129, 139, and 162 each coordinate D-threo-isocitrate. Position 316 (D316) interacts with Mg(2+). NADP(+) is bound by residues 348 to 354 (HGTAPKY), N361, Y400, and R404.

Belongs to the isocitrate and isopropylmalate dehydrogenases family. Homodimer. Mg(2+) is required as a cofactor. Requires Mn(2+) as cofactor.

The enzyme catalyses D-threo-isocitrate + NADP(+) = 2-oxoglutarate + CO2 + NADPH. Its function is as follows. Catalyzes the oxidative decarboxylation of isocitrate to 2-oxoglutarate and carbon dioxide with the concomitant reduction of NADP(+). This Helicobacter pylori (strain J99 / ATCC 700824) (Campylobacter pylori J99) protein is Isocitrate dehydrogenase [NADP] (icd).